The chain runs to 200 residues: Glycerol-3-phosphate acyltransferase (200 aa).

Helical transmembrane passes span 2–22 (FNIP…AVIV), 51–71 (KAAA…VLLA), 84–104 (AIAA…FFGF), 114–134 (LGVL…IWLV), and 159–179 (FFMP…LVLF).

The protein belongs to the PlsY family. In terms of assembly, probably interacts with PlsX.

It is found in the cell inner membrane. The catalysed reaction is an acyl phosphate + sn-glycerol 3-phosphate = a 1-acyl-sn-glycero-3-phosphate + phosphate. It functions in the pathway lipid metabolism; phospholipid metabolism. In terms of biological role, catalyzes the transfer of an acyl group from acyl-phosphate (acyl-PO(4)) to glycerol-3-phosphate (G3P) to form lysophosphatidic acid (LPA). This enzyme utilizes acyl-phosphate as fatty acyl donor, but not acyl-CoA or acyl-ACP. The chain is Glycerol-3-phosphate acyltransferase from Neisseria meningitidis serogroup B (strain ATCC BAA-335 / MC58).